The chain runs to 335 residues: Putative serine/threonine-protein kinase 040L (335 aa).

The region spanning 33–329 is the Protein kinase domain; the sequence is YYYQEFHDEG…DRLTELHHHL (297 aa). ATP is bound by residues 39 to 47 and lysine 62; that span reads HDEGGYGSI. Aspartate 196 (proton acceptor) is an active-site residue.

It belongs to the protein kinase superfamily. Ser/Thr protein kinase family.

The chain is Putative serine/threonine-protein kinase 040L from Invertebrate iridescent virus 3 (IIV-3).